The primary structure comprises 3313 residues: Cadherin EGF LAG seven-pass G-type receptor 3 (3313 aa).

The signal sequence occupies residues 1–31; the sequence is MARRPLWWGLPGPSTPLLLLLLFSLFPSSRE. The Extracellular segment spans residues 32–2538; that stretch reads EMGGGGDQGW…RLEGDLELLA (2507 aa). 2 disordered regions span residues 148–187 and 205–269; these read LPLDALSPGDSDLRNSSPHPSELLAQPDSPRPVAFQRNGR and EPGH…RMRS. The segment covering 258–268 has biased composition (basic and acidic residues); the sequence is HESRTAPERMR. Cadherin domains are found at residues 317–424, 425–536, 537–642, 643–747, 748–849, 850–952, 953–1058, 1059–1160, and 1161–1257; these read PQYN…APVF, EQAQ…APQF, SEKR…SPIF, VSTP…RPEF, TMKE…RPVF, QSAH…APQF, VASH…APVF, PAEE…SPVL, and NNFQ…VVII. A glycan (N-linked (GlcNAc...) asparagine) is linked at asparagine 623. Asparagine 838 carries N-linked (GlcNAc...) asparagine glycosylation. N-linked (GlcNAc...) asparagine glycans are attached at residues asparagine 1173, asparagine 1213, asparagine 1308, and asparagine 1318. In terms of domain architecture, EGF-like 1; calcium-binding spans 1366–1424; that stretch reads DDNVCLREPCENYMKCVSVLRFDSSAPFLASASTLFRPIQPIAGLRCRCPPGFTGDFCE. Disulfide bonds link cysteine 1370-cysteine 1381, cysteine 1375-cysteine 1412, cysteine 1414-cysteine 1423, cysteine 1430-cysteine 1441, cysteine 1435-cysteine 1450, cysteine 1452-cysteine 1461, cysteine 1470-cysteine 1481, cysteine 1475-cysteine 1491, and cysteine 1493-cysteine 1504. The EGF-like 2; calcium-binding domain occupies 1426 to 1462; sequence ELDLCYSNPCRNGGACARREGGYTCVCRPRFTGEDCE. The 40-residue stretch at 1466–1505 folds into the EGF-like 3; calcium-binding domain; sequence EAGRCVPGVCRNGGTCTNAPNGGFRCQCPAGGAFEGPRCE. The Laminin G-like 1 domain occupies 1506 to 1710; sequence VAARSFPPSS…VANNGTTAGC (205 aa). Residues asparagine 1640 and asparagine 1704 are each glycosylated (N-linked (GlcNAc...) asparagine). Intrachain disulfides connect cysteine 1684/cysteine 1710, cysteine 1717/cysteine 1728, cysteine 1722/cysteine 1737, and cysteine 1739/cysteine 1748. The EGF-like 4; calcium-binding domain maps to 1713-1749; that stretch reads KSHFCASGPCKNGGLCSERWGGFSCDCPVGFGGKDCR. In terms of domain architecture, Laminin G-like 2 spans 1753 to 1935; that stretch reads AHPYHFQGNG…SHRINVEPGC (183 aa). Residue asparagine 1761 is glycosylated (N-linked (GlcNAc...) asparagine). 9 disulfide bridges follow: cysteine 1906/cysteine 1935, cysteine 1941/cysteine 1952, cysteine 1946/cysteine 1961, cysteine 1963/cysteine 1972, cysteine 1976/cysteine 1987, cysteine 1981/cysteine 1999, cysteine 2001/cysteine 2010, cysteine 2018/cysteine 2031, and cysteine 2033/cysteine 2043. One can recognise an EGF-like 5; calcium-binding domain in the interval 1937–1972; that stretch reads VTNPCASGPCPPHANCKDLWQTFSCTCWPGYYGPGC. The residue at position 1954 (aspartate 1954) is a (3R)-3-hydroxyaspartate. An EGF-like 6; calcium-binding domain is found at 1973-2011; that stretch reads VDACLLNPCQNQGSCRHLQGGPHGYTCDCASGYFGQHCE. An EGF-like 7; calcium-binding domain is found at 2012-2044; sequence HRMDQQCPRGWWGSPTCGPCNCDVHKGFDPNCN. N-linked (GlcNAc...) asparagine glycosylation is present at asparagine 2044. An EGF-like 8; calcium-binding domain is found at 2046–2081; sequence TSGQCHCKEFHYRPRGSDSCLPCDCYPVGSTSRSCA. 5 disulfides stabilise this stretch: cysteine 2050-cysteine 2065, cysteine 2052-cysteine 2068, cysteine 2070-cysteine 2080, cysteine 2089-cysteine 2098, and cysteine 2101-cysteine 2113. Positions 2068 to 2115 constitute a Laminin EGF-like domain; it reads CDCYPVGSTSRSCAPHSGQCPCRPGALGRQCNSCDSPFAEVTASGCRV. Tyrosine 2117 carries the phosphotyrosine modification. N-linked (GlcNAc...) asparagine glycans are attached at residues asparagine 2173, asparagine 2192, asparagine 2382, asparagine 2472, and asparagine 2504. Residues 2356–2395 form a disordered region; that stretch reads HTHVLLPSQSPQPSPSEVLPTSSNAENATASGVVSPPAPL. The GAIN-B domain occupies 2364 to 2528; sequence QSPQPSPSEV…GVLMDASPRE (165 aa). The segment covering 2374–2387 has biased composition (polar residues); it reads LPTSSNAENATASG. 2 disulfides stabilise this stretch: cysteine 2478–cysteine 2510 and cysteine 2498–cysteine 2512. Residues 2478-2528 form a GPS region; it reads CVQWDPPGPADQHGMWTARDCELVHRNGSHARCRCSRTGTFGVLMDASPRE. A helical transmembrane segment spans residues 2539–2559; it reads VFTHVVVAASVTALVLTAAVL. Over 2560-2570 the chain is Cytoplasmic; it reads LSLRSLKSNVR. The chain crosses the membrane as a helical span at residues 2571-2591; that stretch reads GIHANVAAALGVAELLFLLGI. Over 2592 to 2599 the chain is Extracellular; it reads HRTHNQLL. The helical transmembrane segment at 2600–2620 threads the bilayer; sequence CTVVAILLHYFFLSTFAWLLV. The Cytoplasmic segment spans residues 2621–2641; that stretch reads QGLHLYRMQVEPRNVDRGAMR. A helical transmembrane segment spans residues 2642 to 2662; sequence FYHALGWGVPAVLLGLAVGLD. Over 2663–2679 the chain is Extracellular; sequence PEGYGNPDFCWISIHEP. The chain crosses the membrane as a helical span at residues 2680-2700; it reads LIWSFAGPIVLVIVMNGIMFL. Residues 2701 to 2724 are Cytoplasmic-facing; that stretch reads LAARTSCSTGQREAKKTSVLRTLR. Residues 2725 to 2745 traverse the membrane as a helical segment; sequence SSFLLLLLVSASWLFGLLAVN. Residues 2746-2752 are Extracellular-facing; sequence HSVLAFH. Residues 2753–2773 traverse the membrane as a helical segment; the sequence is YLHAGLCGLQGLAVLLLFCVL. The Cytoplasmic segment spans residues 2774–3313; that stretch reads NADARAAWTP…SEVPRSEGHS (540 aa). 2 disordered regions span residues 2887 to 2927 and 2977 to 3004; these read AGAD…RPLR and SNKDAANNNQPELALTSGDETSLGRAQR. Positions 2889–2899 are enriched in acidic residues; that stretch reads ADSDSDSDLSL. Over residues 2918–2927 the composition is skewed to basic residues; that stretch reads TRGRFQRPLR. The residue at position 3050 (tyrosine 3050) is a Phosphotyrosine. 2 disordered regions span residues 3091-3242 and 3255-3313; these read APVL…PSTE and NSSA…EGHS. Residue serine 3098 is modified to Phosphoserine. Residues 3102 to 3119 show a composition bias toward basic and acidic residues; it reads SQERLDTAPARLEPRDRG. 2 stretches are compositionally biased toward low complexity: residues 3178 to 3197 and 3255 to 3289; these read QRPLSRDPLLPSRPLDSLSR and NSSALSSVQSSSTPSGPHTTATPSATASALGPSTP. The segment covering 3290-3301 has biased composition (polar residues); it reads RSATSHSISELS.

This sequence belongs to the G-protein coupled receptor 2 family. LN-TM7 subfamily. The iron and 2-oxoglutarate dependent 3-hydroxylation of aspartate and asparagine is (R) stereospecific within EGF domains. As to expression, expressed in the brain. Expressed in cerebellum, olfactory bulb, cerebral cortex, hippocampus and brain stem.

It is found in the cell membrane. In terms of biological role, receptor that may have an important role in cell/cell signaling during nervous system formation. This chain is Cadherin EGF LAG seven-pass G-type receptor 3 (Celsr3), found in Rattus norvegicus (Rat).